A 392-amino-acid polypeptide reads, in one-letter code: Galactokinase (392 aa).

Residue 37–40 participates in substrate binding; that stretch reads EHTD. ATP-binding positions include Ser-71 and 128 to 134; that span reads GAGLSSS. Mg(2+)-binding residues include Ser-134 and Glu-166. Asp-178 functions as the Proton acceptor in the catalytic mechanism. Tyr-228 is a binding site for substrate.

It belongs to the GHMP kinase family. GalK subfamily.

It localises to the cytoplasm. It catalyses the reaction alpha-D-galactose + ATP = alpha-D-galactose 1-phosphate + ADP + H(+). It functions in the pathway carbohydrate metabolism; galactose metabolism. Catalyzes the transfer of the gamma-phosphate of ATP to D-galactose to form alpha-D-galactose-1-phosphate (Gal-1-P). The protein is Galactokinase of Streptococcus pneumoniae serotype 4 (strain ATCC BAA-334 / TIGR4).